The following is a 182-amino-acid chain: Large ribosomal subunit protein uL10 (182 aa).

It belongs to the universal ribosomal protein uL10 family. As to quaternary structure, part of the ribosomal stalk of the 50S ribosomal subunit. The N-terminus interacts with L11 and the large rRNA to form the base of the stalk. The C-terminus forms an elongated spine to which L12 dimers bind in a sequential fashion forming a multimeric L10(L12)X complex.

Its function is as follows. Forms part of the ribosomal stalk, playing a central role in the interaction of the ribosome with GTP-bound translation factors. This chain is Large ribosomal subunit protein uL10, found in Parafrankia sp. (strain EAN1pec).